The sequence spans 490 residues: Bifunctional pantoate ligase/cytidylate kinase (490 aa).

1–8 lines the ATP pocket; the sequence is MGGLHQGH. Residues 1 to 253 are pantoate--beta-alanine ligase; it reads MGGLHQGHAR…CGETRLIDHV (253 aa). Residue His-8 is the Proton donor of the active site. A (R)-pantoate-binding site is contributed by Gln-35. Gln-35 is a binding site for beta-alanine. 124 to 127 contacts ATP; it reads GEKD. Gln-130 is a binding site for (R)-pantoate. Residues Val-153 and 161–164 each bind ATP; that span reads ASSR. The cytidylate kinase stretch occupies residues 254–490; sequence FIMTRSPIVA…AKEIWPTPQG (237 aa).

The protein in the N-terminal section; belongs to the pantothenate synthetase family. This sequence in the C-terminal section; belongs to the cytidylate kinase family. Type 1 subfamily.

The protein localises to the cytoplasm. It carries out the reaction (R)-pantoate + beta-alanine + ATP = (R)-pantothenate + AMP + diphosphate + H(+). The enzyme catalyses CMP + ATP = CDP + ADP. The catalysed reaction is dCMP + ATP = dCDP + ADP. It participates in cofactor biosynthesis; (R)-pantothenate biosynthesis; (R)-pantothenate from (R)-pantoate and beta-alanine: step 1/1. Catalyzes the condensation of pantoate with beta-alanine in an ATP-dependent reaction via a pantoyl-adenylate intermediate. In terms of biological role, catalyzes the transfer of a phosphate group from ATP to either CMP or dCMP to form CDP or dCDP and ADP, respectively. The chain is Bifunctional pantoate ligase/cytidylate kinase from Synechococcus sp. (strain WH7803).